The chain runs to 1313 residues: Target of rapamycin complex 1 subunit mip1 (1313 aa).

Residues 1–35 (MNDRISEVSGSSRARRSVLSYGTTETGSDRYTENS) are disordered. Ser834, Ser837, and Ser882 each carry phosphoserine. 7 WD repeats span residues 986 to 1029 (TFNN…NSFK), 1033 to 1074 (SATT…KVEL), 1087 to 1126 (GDRN…CYAN), 1130 to 1170 (RSSN…RDSL), 1176 to 1216 (EHSS…SLQT), 1219 to 1259 (TDNS…NTFR), and 1268 to 1308 (PKPS…IHTD).

It belongs to the WD repeat RAPTOR family. The target of rapamycin complex 1 (TORC1) is composed of at least mip1, pop3/wat1, tco89, toc1 and tor2.

Its subcellular location is the cytoplasm. Its function is as follows. Component of TORC1, which regulates multiple cellular processes to control cell growth in response to environmental signals. Tor2 is essential for growth. Nutrient limitation and environmental stress signals cause inactivation of TORC1. Active TORC1 positively controls cell growth and ribosome biogenesis by regulating ribosomal protein gene expression. TORC1 negatively controls G1 cell-cycle arrest, sexual development and amino acid uptake. Represses mating, meiosis and sporulation efficiency by interfering with the functions of the transcription factor ste11 and the meiosis-promoting RNA-binding protein mei2. The chain is Target of rapamycin complex 1 subunit mip1 from Schizosaccharomyces pombe (strain 972 / ATCC 24843) (Fission yeast).